We begin with the raw amino-acid sequence, 126 residues long: Large ribosomal subunit protein bL12 (126 aa).

It belongs to the bacterial ribosomal protein bL12 family. As to quaternary structure, homodimer. Part of the ribosomal stalk of the 50S ribosomal subunit. Forms a multimeric L10(L12)X complex, where L10 forms an elongated spine to which 2 to 4 L12 dimers bind in a sequential fashion. Binds GTP-bound translation factors.

Its function is as follows. Forms part of the ribosomal stalk which helps the ribosome interact with GTP-bound translation factors. Is thus essential for accurate translation. The chain is Large ribosomal subunit protein bL12 from Rhizorhabdus wittichii (strain DSM 6014 / CCUG 31198 / JCM 15750 / NBRC 105917 / EY 4224 / RW1) (Sphingomonas wittichii).